Here is a 233-residue protein sequence, read N- to C-terminus: Ciliary microtubule inner protein 6 (233 aa).

Composition is skewed to basic and acidic residues over residues 1–14 and 21–33; these read MEGE…KTED and AERK…EKSP. Residues 1–45 form a disordered region; it reads MEGEEKQQQHKTEDDGIACVAERKVEIKNEKSPGKSTQHPKPCVD. Residues 127-159 are mn; sequence GIVPLTSLDVSGEHENNFVEYISFIHQYDARRT. Residues 192 to 233 form a disordered region; it reads LLNTLESGSSEQPQKTDKGNSSGDKVTSPGLCQQNSQELLET. A compositionally biased stretch (polar residues) spans 195–233; it reads TLESGSSEQPQKTDKGNSSGDKVTSPGLCQQNSQELLET.

The protein localises to the cell projection. It localises to the cilium. The chain is Ciliary microtubule inner protein 6 (Cimip6) from Mus musculus (Mouse).